The sequence spans 127 residues: Vacuolar ATPase assembly integral membrane protein VMA21 (127 aa).

The segment at 1–28 (MATRRNPTKESITTSPPPDQQPRQPGEL) is disordered. The Cytoplasmic segment spans residues 1-45 (MATRRNPTKESITTSPPPDQQPRQPGELEHREAIQLRDLPGYPQQ). The helical transmembrane segment at 46-66 (VLWKLIIYSIAVLVLPLSAYF) threads the bilayer. Over 67–79 (YSVNYVFDGNTTY) the chain is Lumenal. The chain crosses the membrane as a helical span at residues 80 to 100 (AGATAAITANLILFSYIVVAM). At 101 to 127 (REDKGDQEQLREQQQLRGNKEETKKMK) the chain is on the cytoplasmic side. The segment at 107-127 (QEQLREQQQLRGNKEETKKMK) is disordered. Over residues 118–127 (GNKEETKKMK) the composition is skewed to basic and acidic residues. Positions 124-127 (KKMK) match the Prevents secretion from ER motif.

The protein belongs to the VMA21 family.

It localises to the endoplasmic reticulum membrane. It is found in the endoplasmic reticulum-Golgi intermediate compartment membrane. Its subcellular location is the cytoplasmic vesicle. The protein localises to the COPII-coated vesicle membrane. In terms of biological role, required for the assembly of the V0 complex of the vacuolar ATPase (V-ATPase) in the endoplasmic reticulum. This Coccidioides immitis (strain RS) (Valley fever fungus) protein is Vacuolar ATPase assembly integral membrane protein VMA21.